Consider the following 404-residue polypeptide: Multidrug resistance protein MdtG (404 aa).

11 consecutive transmembrane segments (helical) span residues L19–V39, L56–A76, L90–I110, A113–V133, G149–L169, P171–I191, L222–L242, I254–P274, I288–T308, F317–N337, and A376–L396.

It belongs to the major facilitator superfamily. DHA1 family. MdtG (TC 2.A.1.2.20) subfamily.

It is found in the cell inner membrane. The protein is Multidrug resistance protein MdtG of Salmonella paratyphi C (strain RKS4594).